A 702-amino-acid chain; its full sequence is Polyribonucleotide nucleotidyltransferase (702 aa).

Mg(2+) contacts are provided by Asp485 and Asp491. Positions 552–611 (PKTSTLQIDPEKIRDVIGAGGKVINKIIADTGVKIDIKEDGLVYVSSAESEGVKEAVKII) constitute a KH domain. The region spanning 621-689 (GEIYLGKVTK…SQGRINLSRK (69 aa)) is the S1 motif domain.

The protein belongs to the polyribonucleotide nucleotidyltransferase family. Requires Mg(2+) as cofactor.

Its subcellular location is the cytoplasm. The enzyme catalyses RNA(n+1) + phosphate = RNA(n) + a ribonucleoside 5'-diphosphate. Its function is as follows. Involved in mRNA degradation. Catalyzes the phosphorolysis of single-stranded polyribonucleotides processively in the 3'- to 5'-direction. The sequence is that of Polyribonucleotide nucleotidyltransferase from Clostridium perfringens (strain SM101 / Type A).